The following is a 505-amino-acid chain: Transcription factor VHR2 (505 aa).

Residues 1–16 are compositionally biased toward basic and acidic residues; the sequence is MIDDTENSKIHLEGSH. Disordered stretches follow at residues 1–23, 105–179, and 421–460; these read MIDD…KYTG, NRKR…LPYP, and QSNP…STSA. Low complexity predominate over residues 133–148; it reads PSSSNMGSCSASNASS. The segment covering 421-443 has biased composition (polar residues); sequence QSNPMRPHSTSEVLSAHSSTKDA.

The protein belongs to the VHR1 family.

The protein resides in the nucleus. Its function is as follows. Transcription factor that regulates ERG9, but seems to have a more global function in transcription. This chain is Transcription factor VHR2 (VHR2), found in Saccharomyces cerevisiae (strain ATCC 204508 / S288c) (Baker's yeast).